A 124-amino-acid polypeptide reads, in one-letter code: Prefoldin subunit beta (124 aa).

This sequence belongs to the prefoldin subunit beta family. As to quaternary structure, heterohexamer of two alpha and four beta subunits.

It is found in the cytoplasm. Functionally, molecular chaperone capable of stabilizing a range of proteins. Seems to fulfill an ATP-independent, HSP70-like function in archaeal de novo protein folding. This Pyrobaculum arsenaticum (strain DSM 13514 / JCM 11321 / PZ6) protein is Prefoldin subunit beta.